The following is a 55-amino-acid chain: UPF0434 protein BARBAKC583_1098 (55 aa).

This sequence belongs to the UPF0434 family.

This Bartonella bacilliformis (strain ATCC 35685 / KC583 / Herrer 020/F12,63) protein is UPF0434 protein BARBAKC583_1098.